The sequence spans 271 residues: L-aspartate dehydrogenase (271 aa).

NAD(+)-binding residues include Ala124 and Asn192. The active site involves His222.

Belongs to the L-aspartate dehydrogenase family.

It catalyses the reaction L-aspartate + NADP(+) + H2O = oxaloacetate + NH4(+) + NADPH + H(+). The enzyme catalyses L-aspartate + NAD(+) + H2O = oxaloacetate + NH4(+) + NADH + H(+). The protein operates within cofactor biosynthesis; NAD(+) biosynthesis; iminoaspartate from L-aspartate (dehydrogenase route): step 1/1. Functionally, specifically catalyzes the NAD or NADP-dependent dehydrogenation of L-aspartate to iminoaspartate. In Methanosarcina barkeri (strain Fusaro / DSM 804), this protein is L-aspartate dehydrogenase.